Consider the following 105-residue polypeptide: MQILTGTAKFDNASFQFLHKTIDVFGSVVLVEGCDPTRSITWVHAWTVTDGVITQVREYFNTSLTVTRFGKSDISSITTLHCPSVWESSLPNRVGKSVPGLVLAL.

The protein to potato anionic peroxidase. In terms of tissue distribution, ubiquitous.

The chain is Wound-induced protein 1 (WUN1) from Solanum tuberosum (Potato).